The sequence spans 89 residues: Small ribosomal subunit protein uS15 (89 aa).

It belongs to the universal ribosomal protein uS15 family. Part of the 30S ribosomal subunit. Forms a bridge to the 50S subunit in the 70S ribosome, contacting the 23S rRNA.

Functionally, one of the primary rRNA binding proteins, it binds directly to 16S rRNA where it helps nucleate assembly of the platform of the 30S subunit by binding and bridging several RNA helices of the 16S rRNA. Forms an intersubunit bridge (bridge B4) with the 23S rRNA of the 50S subunit in the ribosome. The protein is Small ribosomal subunit protein uS15 of Geobacillus stearothermophilus (Bacillus stearothermophilus).